A 314-amino-acid chain; its full sequence is Transcription factor SOX-12 (314 aa).

2 disordered regions span residues 1–40 (MVQQ…SGHI) and 101–287 (MADY…FEFP). A DNA-binding region (HMG box) is located at residues 40–108 (IKRPMNAFMV…KHMADYPDYK (69 aa)). Residues 149–159 (RASGGPLGGGA) are compositionally biased toward gly residues. A compositionally biased stretch (acidic residues) spans 162 to 173 (PEDDDEDEEEEL). Residues 174–187 (LEVRLLETPGRELW) show a composition bias toward basic and acidic residues. The segment covering 191-217 (PAGRAARGPAERAQGPSGEGAAASAAS) has biased composition (low complexity). Residues 221 to 243 (SEDEEPEEEEEEAATAEEGEEET) show a composition bias toward acidic residues. The segment at 282 to 314 (SHFEFPDYCTPEVTEMIAGDWRSSSIADLVFTY) is required for transcriptional activation activity and synergistic coactivation of transcriptional activity with POU3F2.

Expressed in splenic and thymic regulatory T-cells (at protein level). Expressed in embryonic molar and incisor teeth.

The protein resides in the nucleus. Transcription factor that binds to DNA at the consensus sequence 5'-ACCAAAG-3'. Acts as a transcriptional activator. Binds cooperatively with POU3F2/BRN2 or POU3F1/OCT6 to gene promoters, which enhances transcriptional activation. Involved in the differentiation of naive CD4-positive T-cells into peripherally induced regulatory T (pT reg) cells under inflammatory conditions. Binds to the promoter region of the FOXP3 gene and promotes its transcription, and might thereby contribute to pT reg cell differentiation in the spleen and lymph nodes during inflammation. Plays a redundant role with SOX4 and SOX11 in cell survival of developing tissues such as the neural tube, branchial arches and somites, thereby contributing to organogenesis. In Mus musculus (Mouse), this protein is Transcription factor SOX-12 (Sox12).